A 201-amino-acid chain; its full sequence is Pyridoxal 5'-phosphate synthase subunit PdxT (201 aa).

L-glutamine is bound at residue 49–51 (GES). Catalysis depends on Cys-81, which acts as the Nucleophile. L-glutamine contacts are provided by residues Arg-110 and 139–140 (IR). Residues His-180 and Glu-182 each act as charge relay system in the active site.

Belongs to the glutaminase PdxT/SNO family. In terms of assembly, in the presence of PdxS, forms a dodecamer of heterodimers. Only shows activity in the heterodimer.

It catalyses the reaction aldehydo-D-ribose 5-phosphate + D-glyceraldehyde 3-phosphate + L-glutamine = pyridoxal 5'-phosphate + L-glutamate + phosphate + 3 H2O + H(+). The enzyme catalyses L-glutamine + H2O = L-glutamate + NH4(+). It functions in the pathway cofactor biosynthesis; pyridoxal 5'-phosphate biosynthesis. Functionally, catalyzes the hydrolysis of glutamine to glutamate and ammonia as part of the biosynthesis of pyridoxal 5'-phosphate. The resulting ammonia molecule is channeled to the active site of PdxS. The protein is Pyridoxal 5'-phosphate synthase subunit PdxT of Salinispora arenicola (strain CNS-205).